The sequence spans 183 residues: Globin-like protein 26 (183 aa).

Residues 1-25 (MGSSTSTPAPPPKKNKPEGRKADNQ) are disordered. G2 is lipidated: N-myristoyl glycine. Residues 12-18 (PKKNKPE) carry the Nuclear localization signal motif. In terms of domain architecture, Globin spans 26-166 (ILNSYQKSIV…VVDQLRFGYS (141 aa)). Heme-binding residues include H77 and H109.

This sequence belongs to the globin family. As to quaternary structure, homodimer. Occurs in an equilibrium of monomeric and dimeric forms in solution. In terms of tissue distribution, detected in the head mesodermal cell. In the tail region, detected in the stomatointestinal and anal depressor muscle cells.

The protein localises to the cytoplasm. It localises to the nucleus lamina. Its subcellular location is the cell membrane. Its function is as follows. Plays a role in electron transport. Utilizes the bis-histidyl hexacoordinated complex with iron to transfer electrons to cytochrome c and molecular oxygen. Plays a regulatory role in the periodicity of the defecation cycle under oxidative stress conditions. Not involved in imparting protection against general conditions of oxidative stress. May participate in redox reactions under anaerobic conditions. The protein is Globin-like protein 26 of Caenorhabditis elegans.